Here is a 1065-residue protein sequence, read N- to C-terminus: Exportin-T (1065 aa).

Belongs to the exportin family.

It localises to the nucleus. Its subcellular location is the cytoplasm. In terms of biological role, tRNA nucleus export receptor which facilitates tRNA translocation across the nuclear pore complex. Involved in pre-tRNA splicing, probably by affecting the interaction of pre-tRNA with splicing endonuclease. The protein is Exportin-T (LOS1) of Coprinopsis cinerea (strain Okayama-7 / 130 / ATCC MYA-4618 / FGSC 9003) (Inky cap fungus).